Here is a 241-residue protein sequence, read N- to C-terminus: ATP synthase subunit a (241 aa).

5 consecutive transmembrane segments (helical) span residues 30-50 (GQVF…ISLG), 91-111 (FIGT…LIPW), 128-148 (INTT…AGLS), 193-213 (LVVG…VMFL), and 214-234 (GLFT…YYIG).

It belongs to the ATPase A chain family. As to quaternary structure, F-type ATPases have 2 components, CF(1) - the catalytic core - and CF(0) - the membrane proton channel. CF(1) has five subunits: alpha(3), beta(3), gamma(1), delta(1), epsilon(1). CF(0) has four main subunits: a, b, b' and c.

It is found in the cellular thylakoid membrane. Functionally, key component of the proton channel; it plays a direct role in the translocation of protons across the membrane. The polypeptide is ATP synthase subunit a (Prochlorococcus marinus (strain MIT 9515)).